The sequence spans 377 residues: MELKSMDPVEMPIFGSTLKLMKFWSYLFVHNWRRYVAMTPYIIINCTQYVDIYLSTESLDFIIRNVYLAVLFTNTVVRGVLLCVQRFSYERFINILKSFYIELLQSDDPIINILVKETTRLSVLISRINLLMGCCTCIGFVTYPIFGSERVLPYGMYLPTIDEYKYASPYYEIFFVIQAIMAPMGCCMYIPYTNMVVTFTLFAILMCRVLQHKLRSLEKLKNEQVRGEIIWCIKYQLKLSGFVDSMNALNTHLHLVEFLCFGAMLCVLLFSLIIAQTIAQTVIVIAYMVMIFANSVVLYYVANELYFQSFDIAIAAYESNWMDFDVDTQKTLKFLIMRSQKPLAILVGGTYPMNLKMLQSLLNAIYSFFTLLRRVYG.

Residues 1-34 are Cytoplasmic-facing; it reads MELKSMDPVEMPIFGSTLKLMKFWSYLFVHNWRR. The chain crosses the membrane as a helical span at residues 35–55; that stretch reads YVAMTPYIIINCTQYVDIYLS. The Extracellular segment spans residues 56-65; that stretch reads TESLDFIIRN. The chain crosses the membrane as a helical span at residues 66 to 86; it reads VYLAVLFTNTVVRGVLLCVQR. The Cytoplasmic segment spans residues 87–127; the sequence is FSYERFINILKSFYIELLQSDDPIINILVKETTRLSVLISR. Residues 128-148 form a helical membrane-spanning segment; sequence INLLMGCCTCIGFVTYPIFGS. Over 149-172 the chain is Extracellular; it reads ERVLPYGMYLPTIDEYKYASPYYE. Residues 173–193 traverse the membrane as a helical segment; that stretch reads IFFVIQAIMAPMGCCMYIPYT. The Cytoplasmic segment spans residues 194–254; it reads NMVVTFTLFA…SMNALNTHLH (61 aa). A helical membrane pass occupies residues 255–275; that stretch reads LVEFLCFGAMLCVLLFSLIIA. Topologically, residues 276–280 are extracellular; it reads QTIAQ. The helical transmembrane segment at 281–301 threads the bilayer; the sequence is TVIVIAYMVMIFANSVVLYYV. Over 302–344 the chain is Cytoplasmic; sequence ANELYFQSFDIAIAAYESNWMDFDVDTQKTLKFLIMRSQKPLA. A helical transmembrane segment spans residues 345 to 365; that stretch reads ILVGGTYPMNLKMLQSLLNAI. Topologically, residues 366–377 are extracellular; sequence YSFFTLLRRVYG.

Belongs to the insect chemoreceptor superfamily. Heteromeric odorant receptor channel (TC 1.A.69) family. Or30a subfamily. In terms of assembly, interacts with Orco. Complexes exist early in the endomembrane system in olfactory sensory neurons (OSNs), coupling these complexes to the conserved ciliary trafficking pathway.

Its subcellular location is the cell membrane. Functionally, odorant receptor which mediates acceptance or avoidance behavior, depending on its substrates. The odorant receptor repertoire encodes a large collection of odor stimuli that vary widely in identity, intensity, and duration. May form a complex with Orco to form odorant-sensing units, providing sensitive and prolonged odorant signaling and calcium permeability. Involved in the behavioral responses to propyl acetate and anisole. The sequence is that of Odorant receptor 30a (Or30a) from Drosophila melanogaster (Fruit fly).